Here is a 296-residue protein sequence, read N- to C-terminus: GTPase Era (296 aa).

Positions 7–174 (RTGFVAIVGR…LEEIAQRLPE (168 aa)) constitute an Era-type G domain. Residues 15–22 (GRPNVGKS) form a G1 region. Residue 15–22 (GRPNVGKS) participates in GTP binding. Residues 41-45 (QTTRH) are G2. A G3 region spans residues 62–65 (DTPG). GTP contacts are provided by residues 62–66 (DTPGF) and 123–126 (SKID). The interval 123 to 126 (SKID) is G4. Residues 153 to 155 (VSA) are G5. The region spanning 197–281 (VREKIFRLVG…HLEVYIKVRK (85 aa)) is the KH type-2 domain.

This sequence belongs to the TRAFAC class TrmE-Era-EngA-EngB-Septin-like GTPase superfamily. Era GTPase family. In terms of assembly, monomer.

Its subcellular location is the cytoplasm. It localises to the cell inner membrane. In terms of biological role, an essential GTPase that binds both GDP and GTP, with rapid nucleotide exchange. Plays a role in 16S rRNA processing and 30S ribosomal subunit biogenesis and possibly also in cell cycle regulation and energy metabolism. The sequence is that of GTPase Era from Bordetella avium (strain 197N).